The following is a 268-amino-acid chain: Tryptophan synthase alpha chain (268 aa).

Catalysis depends on proton acceptor residues Glu49 and Asp60.

The protein belongs to the TrpA family. Tetramer of two alpha and two beta chains.

The catalysed reaction is (1S,2R)-1-C-(indol-3-yl)glycerol 3-phosphate + L-serine = D-glyceraldehyde 3-phosphate + L-tryptophan + H2O. The protein operates within amino-acid biosynthesis; L-tryptophan biosynthesis; L-tryptophan from chorismate: step 5/5. Its function is as follows. The alpha subunit is responsible for the aldol cleavage of indoleglycerol phosphate to indole and glyceraldehyde 3-phosphate. The sequence is that of Tryptophan synthase alpha chain from Shigella flexneri serotype 5b (strain 8401).